We begin with the raw amino-acid sequence, 368 residues long: Xaa-Pro dipeptidase (368 aa).

The Mn(2+) site is built by aspartate 223, aspartate 234, histidine 298, glutamate 327, and glutamate 341.

It belongs to the peptidase M24B family. The cofactor is Mn(2+).

It is found in the cytoplasm. The enzyme catalyses Xaa-L-Pro dipeptide + H2O = an L-alpha-amino acid + L-proline. In Lactobacillus helveticus (Lactobacillus suntoryeus), this protein is Xaa-Pro dipeptidase (pepQ).